The following is a 1042-amino-acid chain: Isoleucine--tRNA ligase (1042 aa).

Positions 48–58 (PFATGLPHFGH) match the 'HIGH' region motif. A 'KMSKS' region motif is present at residues 594–598 (KMSKS). K597 contacts ATP.

This sequence belongs to the class-I aminoacyl-tRNA synthetase family. IleS type 2 subfamily. Monomer. Requires Zn(2+) as cofactor.

Its subcellular location is the cytoplasm. The catalysed reaction is tRNA(Ile) + L-isoleucine + ATP = L-isoleucyl-tRNA(Ile) + AMP + diphosphate. Functionally, catalyzes the attachment of isoleucine to tRNA(Ile). As IleRS can inadvertently accommodate and process structurally similar amino acids such as valine, to avoid such errors it has two additional distinct tRNA(Ile)-dependent editing activities. One activity is designated as 'pretransfer' editing and involves the hydrolysis of activated Val-AMP. The other activity is designated 'posttransfer' editing and involves deacylation of mischarged Val-tRNA(Ile). The polypeptide is Isoleucine--tRNA ligase (Borrelia garinii subsp. bavariensis (strain ATCC BAA-2496 / DSM 23469 / PBi) (Borreliella bavariensis)).